Here is a 455-residue protein sequence, read N- to C-terminus: Golgi pH regulator (455 aa).

The next 5 membrane-spanning stretches (helical) occupy residues 5–25 (IDSSIMVTSQILFFGFGWLFF), 46–66 (VTFAFSCTMFELIIFEILGVL), 79–99 (LCVILLILVFMVPFYIGYFIV), 114–134 (CLLWLTFMYFFWKLGDPFPIL), and 150–170 (VGVIGVTLMALLSGFGAVNCP). N-linked (GlcNAc...) asparagine glycans are attached at residues N180 and N243. Transmembrane regions (helical) follow at residues 290-310 (GYFFSIYCVWKIFMATINIVL), 343-363 (ISFILVGIIIVSSIRGLLITL), 378-398 (VIVLLLAQIMGMYFVSSVLLI), and 425-445 (WFDVIFLVSALSSILFLYLAH).

This sequence belongs to the Golgi pH regulator (TC 1.A.38) family. In terms of assembly, homotrimer. Interacts with RABL3; the interaction stabilizes GPR89B.

It localises to the golgi apparatus membrane. The catalysed reaction is iodide(out) = iodide(in). The enzyme catalyses chloride(in) = chloride(out). It carries out the reaction bromide(in) = bromide(out). It catalyses the reaction fluoride(in) = fluoride(out). In terms of biological role, voltage-gated channel that enables the transfer of anions such as iodide, chloride, bromide and fluoride which may function in counter-ion conductance and participates in Golgi acidification. Plays a role in lymphocyte development, probably by acting as a RABL3 effector in hematopoietic cells. In Cricetulus griseus (Chinese hamster), this protein is Golgi pH regulator.